The following is a 742-amino-acid chain: F-box only protein 30 (742 aa).

The TRAF-type zinc finger occupies 49 to 108; it reads EHRLLCPFERVPCLNSNFGCPFTLARNKVAEHLEMCPASVVCCTMEWNRWPVSYSDRKSY. Residues 214–242 form a disordered region; it reads SLQGTTNEMDEESNRESSQDRNAKDQDHL. Residues 225-242 show a composition bias toward basic and acidic residues; that stretch reads ESNRESSQDRNAKDQDHL. At serine 379 the chain carries Phosphoserine. The F-box domain occupies 607-653; sequence SDHLSSLPFEVLQHIAGFLDGFSLCQLACVSRLMRDICGSLLQSRGM.

In terms of assembly, part of a SCF (SKP1-cullin-F-box) protein ligase complex. Interacts with SKP1, CUL1 and RBX1/ROC1. Auto-ubiquitinated. Post-translationally, may be neddylated. Neddylation may be required for E3 ligase activity.

The protein operates within protein modification; protein ubiquitination. In terms of biological role, substrate-recognition component of the SCF (SKP1-CUL1-F-box protein)-type E3 ubiquitin ligase complex. Required for muscle atrophy following denervation. The protein is F-box only protein 30 (Fbxo30) of Rattus norvegicus (Rat).